A 392-amino-acid chain; its full sequence is Protein O-glucosyltransferase 1 (392 aa).

The first 23 residues, 1–23 (MERRAGSRLRAWMLLLLLCPVQG), serve as a signal peptide directing secretion. 4 cysteine pairs are disulfide-bonded: Cys-49/Cys-56, Cys-54/Cys-357, Cys-102/Cys-108, and Cys-263/Cys-286. Asn-53 carries N-linked (GlcNAc...) asparagine glycosylation. The tract at residues 103 to 107 (MFPSR) is interaction with the consensus sequence C-X-S-X-[PA]-C in peptide substrates. Asp-133 serves as the catalytic Proton donor/acceptor. The interval 172 to 178 (AVWPLYP) is interaction with the consensus sequence C-X-S-X-[PA]-C in peptide substrates. Position 177 (Tyr-177) interacts with UDP-alpha-D-glucose. N-linked (GlcNAc...) asparagine glycosylation occurs at Asn-204. Residues Ser-212, Arg-218, and 274–279 (VAASFR) each bind UDP-alpha-D-glucose. A glycan (N-linked (GlcNAc...) asparagine) is linked at Asn-373. A Prevents secretion from ER motif is present at residues 389 to 392 (KTEL).

Belongs to the glycosyltransferase 90 family. In terms of tissue distribution, widely expressed in newborn and adult tissues (at protein level).

It localises to the endoplasmic reticulum lumen. It catalyses the reaction L-seryl-[EGF-like domain protein] + UDP-alpha-D-xylose = 3-O-(beta-D-xylosyl)-L-seryl-[EGF-like domain protein] + UDP + H(+). The catalysed reaction is L-seryl-[EGF-like domain protein] + UDP-alpha-D-glucose = 3-O-(beta-D-glucosyl)-L-seryl-[EGF-like domain protein] + UDP + H(+). Its pathway is protein modification; protein glycosylation. Functionally, dual specificity glycosyltransferase that catalyzes the transfer of glucose and xylose from UDP-glucose and UDP-xylose, respectively, to a serine residue found in the consensus sequence of C-X-S-X-P-C. Specifically targets extracellular EGF repeats of protein such as CRB2, F7, F9 and NOTCH2. Acts as a positive regulator of Notch signaling by mediating O-glucosylation of Notch, leading to regulate muscle development. Notch glucosylation does not affect Notch ligand binding. Required during early development to promote gastrulation: acts by mediating O-glucosylation of CRB2, which is required for CRB2 localization to the cell membrane. This Mus musculus (Mouse) protein is Protein O-glucosyltransferase 1.